A 532-amino-acid chain; its full sequence is Cytochrome c oxidase subunit 1 (532 aa).

3 helical membrane-spanning segments follow: residues 1–21 (MWDY…AYAA), 27–47 (LPYM…LIWV), and 69–89 (GVIA…VIAF). Residue His114 coordinates heme b. Transmembrane regions (helical) follow at residues 115 to 135 (TSAV…FYVV), 143 to 163 (LFGG…IIVT), 185 to 205 (LDIL…GTIF), 212 to 232 (IYVA…LHIV), 263 to 283 (GHNA…YYFV), 296 to 316 (LSIV…PHHL), 328 to 348 (LGMV…INGL), and 366 to 386 (MMVV…MMSI). Residues His264, His314, and His315 each contribute to the Cu cation site. Heme b-binding residues include His402 and His404. A run of 3 helical transmembrane segments spans residues 403 to 423 (VHSG…YFLT), 442 to 462 (FWLA…TGIM), and 496 to 516 (VGGV…WATV).

Belongs to the heme-copper respiratory oxidase family. Cu(2+) is required as a cofactor. The cofactor is heme b.

Its subcellular location is the cell membrane. The catalysed reaction is 4 Fe(II)-[cytochrome c] + O2 + 8 H(+)(in) = 4 Fe(III)-[cytochrome c] + 2 H2O + 4 H(+)(out). It participates in energy metabolism; oxidative phosphorylation. Cytochrome c oxidase is the component of the respiratory chain that catalyzes the reduction of oxygen to water. Subunits 1-3 form the functional core of the enzyme complex. Co I is the catalytic subunit of the enzyme. Electrons originating in cytochrome c are transferred via the copper A center of subunit 2 and heme a of subunit 1 to the bimetallic center formed by heme a3 and copper B. This cytochrome c oxidase shows proton pump activity across the membrane in addition to the electron transfer. The polypeptide is Cytochrome c oxidase subunit 1 (ctaD) (Rhodobacter capsulatus (Rhodopseudomonas capsulata)).